The sequence spans 647 residues: Leucine aminopeptidase 2 (647 aa).

Substrate contacts are provided by residues 169–171 (QCQ) and 295–300 (PYGGME). H324 lines the Zn(2+) pocket. E325 serves as the catalytic Proton acceptor. Zn(2+) is bound by residues H328 and E347. Y418 functions as the Proton donor in the catalytic mechanism.

This sequence belongs to the peptidase M1 family. Zn(2+) serves as cofactor.

It localises to the cytoplasm. It is found in the nucleus. It catalyses the reaction an epoxide + H2O = an ethanediol. Functionally, aminopeptidase that preferentially cleaves di- and tripeptides. Also has low epoxide hydrolase activity (in vitro). Can hydrolyze the epoxide leukotriene LTA(4) but it forms preferentially 5,6-dihydroxy-7,9,11,14-eicosatetraenoic acid rather than the cytokine leukotriene B(4) as the product compared to the homologous mammalian enzyme (in vitro). The protein is Leucine aminopeptidase 2 of Yarrowia lipolytica (strain CLIB 122 / E 150) (Yeast).